Here is a 258-residue protein sequence, read N- to C-terminus: Short-chain dehydrogenase/reductase aba4 (258 aa).

Positions 20, 66, and 130 each coordinate NADP(+). Residues Ser146 and Tyr160 each act as proton donor in the active site. The NADP(+) site is built by Tyr160, Lys164, Ile193, and Thr195. Lys164 acts as the Lowers pKa of active site Tyr in catalysis.

The protein belongs to the short-chain dehydrogenases/reductases (SDR) family.

It functions in the pathway hormone biosynthesis. Short-chain dehydrogenase/reductase; part of the gene cluster that mediates the biosynthesis of abscisic acid (ABA), a phytohormone that acts antagonistically toward salicylic acid (SA), jasmonic acid (JA) and ethylene (ETH) signaling, to impede plant defense responses. The first step of the pathway catalyzes the reaction from farnesyl diphosphate to alpha-ionylideneethane performed by the alpha-ionylideneethane synthase aba3 via a three-step reaction mechanism involving 2 neutral intermediates, beta-farnesene and allofarnesene. The cytochrome P450 monooxygenase aba1 might then be involved in the conversion of alpha-ionylideneethane to alpha-ionylideneacetic acid. Alpha-ionylideneacetic acid is further converted to abscisic acid in 2 steps involving the cytochrome P450 monooxygenase aba2 and the short-chain dehydrogenase/reductase aba4, via the intermediates 1'-deoxy-ABA or 1',4'-trans-diol-ABA, depending on the order of action of these 2 enzymes. Aba2 is responsible for the hydroxylation of carbon atom C-1' and aba4 might be involved in the oxidation of the C-4' carbon atom. The protein is Short-chain dehydrogenase/reductase aba4 of Botryotinia fuckeliana (Noble rot fungus).